A 485-amino-acid chain; its full sequence is NADH-quinone oxidoreductase subunit N (485 aa).

Transmembrane regions (helical) follow at residues 8-28 (LIAL…MLSI), 35-55 (FLNA…LWFV), 71-91 (GFAM…CTFA), 105-125 (FYLL…ANHL), 127-147 (SLFL…GYAF), 159-179 (YTIL…LVYA), 203-223 (LLAG…LVPF), 235-255 (PAPV…GVVM), 271-291 (VVLA…ALSQ), 297-317 (LLGY…IALQ), 326-346 (VGVY…VVSL), 373-393 (AAVM…LGFI), 408-430 (WWLV…RVAV), and 455-475 (IVVL…QPLI).

It belongs to the complex I subunit 2 family. As to quaternary structure, NDH-1 is composed of 13 different subunits. Subunits NuoA, H, J, K, L, M, N constitute the membrane sector of the complex.

It is found in the cell inner membrane. It catalyses the reaction a quinone + NADH + 5 H(+)(in) = a quinol + NAD(+) + 4 H(+)(out). Its function is as follows. NDH-1 shuttles electrons from NADH, via FMN and iron-sulfur (Fe-S) centers, to quinones in the respiratory chain. The immediate electron acceptor for the enzyme in this species is believed to be ubiquinone. Couples the redox reaction to proton translocation (for every two electrons transferred, four hydrogen ions are translocated across the cytoplasmic membrane), and thus conserves the redox energy in a proton gradient. This chain is NADH-quinone oxidoreductase subunit N, found in Escherichia coli O139:H28 (strain E24377A / ETEC).